We begin with the raw amino-acid sequence, 47 residues long: Cytochrome b559 subunit beta (47 aa).

Residues 22–38 (WLAVHTLAIPTVFFLGA) traverse the membrane as a helical segment. H26 contacts heme.

This sequence belongs to the PsbE/PsbF family. Heterodimer of an alpha subunit and a beta subunit. PSII is composed of 1 copy each of membrane proteins PsbA, PsbB, PsbC, PsbD, PsbE, PsbF, PsbH, PsbI, PsbJ, PsbK, PsbL, PsbM, PsbT, PsbX, PsbY, PsbZ, Psb30/Ycf12, peripheral proteins PsbO, CyanoQ (PsbQ), PsbU, PsbV and a large number of cofactors. It forms dimeric complexes. It depends on heme b as a cofactor.

Its subcellular location is the cellular thylakoid membrane. This b-type cytochrome is tightly associated with the reaction center of photosystem II (PSII). PSII is a light-driven water:plastoquinone oxidoreductase that uses light energy to abstract electrons from H(2)O, generating O(2) and a proton gradient subsequently used for ATP formation. It consists of a core antenna complex that captures photons, and an electron transfer chain that converts photonic excitation into a charge separation. The protein is Cytochrome b559 subunit beta of Synechococcus sp. (strain JA-3-3Ab) (Cyanobacteria bacterium Yellowstone A-Prime).